The following is a 485-amino-acid chain: Glutamyl-tRNA(Gln) amidotransferase subunit A (485 aa).

Catalysis depends on charge relay system residues lysine 82 and serine 157. Catalysis depends on serine 181, which acts as the Acyl-ester intermediate.

Belongs to the amidase family. GatA subfamily. As to quaternary structure, heterotrimer of A, B and C subunits.

The catalysed reaction is L-glutamyl-tRNA(Gln) + L-glutamine + ATP + H2O = L-glutaminyl-tRNA(Gln) + L-glutamate + ADP + phosphate + H(+). In terms of biological role, allows the formation of correctly charged Gln-tRNA(Gln) through the transamidation of misacylated Glu-tRNA(Gln) in organisms which lack glutaminyl-tRNA synthetase. The reaction takes place in the presence of glutamine and ATP through an activated gamma-phospho-Glu-tRNA(Gln). In Treponema denticola (strain ATCC 35405 / DSM 14222 / CIP 103919 / JCM 8153 / KCTC 15104), this protein is Glutamyl-tRNA(Gln) amidotransferase subunit A.